The following is an 848-amino-acid chain: ATP-dependent Clp protease ATP-binding subunit ClpC1 (848 aa).

The 143-residue stretch at 2–144 (FERFTDRARR…RQQVIQLLSG (143 aa)) folds into the Clp R domain. Repeat stretches follow at residues 5–70 (FTDR…IGQG) and 80–144 (FTPR…LLSG). The interval 171-418 (LDQFGRNLTA…RMRIRRMTAP (248 aa)) is i. 216–223 (GEPGVGKT) contacts ATP. The 36-residue stretch at 425–460 (DEKIAEARREKESAIDAQDFEKAASLRDREKTLVAQ) folds into the UVR domain. Positions 479–670 (VDDEQIAEVL…VLIFTSNLGT (192 aa)) are II. An ATP-binding site is contributed by 553 to 560 (GPSGVGKT). Residues 821 to 848 (TGTRKPPAEPDLAKAGAHSAGGPEPAAR) form a disordered region.

Belongs to the ClpA/ClpB family. ClpC subfamily.

Functionally, ATP-dependent specificity component of the Clp protease. It directs the protease to specific substrates. Can perform chaperone functions in the absence of ClpP. Degrades anti-sigma-E factor RseA in the presence of ClpP2. The protein is ATP-dependent Clp protease ATP-binding subunit ClpC1 (clpC1) of Mycobacterium tuberculosis (strain ATCC 25618 / H37Rv).